Consider the following 712-residue polypeptide: Ribosomal RNA large subunit methyltransferase K/L (712 aa).

Residues 42–153 form the THUMP domain; it reads QALRIVMWSR…KGRASLSIDL (112 aa).

The protein belongs to the methyltransferase superfamily. RlmKL family.

Its subcellular location is the cytoplasm. It catalyses the reaction guanosine(2445) in 23S rRNA + S-adenosyl-L-methionine = N(2)-methylguanosine(2445) in 23S rRNA + S-adenosyl-L-homocysteine + H(+). The catalysed reaction is guanosine(2069) in 23S rRNA + S-adenosyl-L-methionine = N(2)-methylguanosine(2069) in 23S rRNA + S-adenosyl-L-homocysteine + H(+). Functionally, specifically methylates the guanine in position 2445 (m2G2445) and the guanine in position 2069 (m7G2069) of 23S rRNA. In Stenotrophomonas maltophilia (strain K279a), this protein is Ribosomal RNA large subunit methyltransferase K/L.